Reading from the N-terminus, the 1148-residue chain is Envelopment polyprotein (1148 aa).

Positions 1 to 23 are cleaved as a signal peptide; sequence MGELSPVCLYLLLQGLLLCNTGA. The Lumenal segment spans residues 24-495; sequence ARNLNELKME…VPGLHGWATM (472 aa). 6 cysteine pairs are disulfide-bonded: Cys-34-Cys-159, Cys-68-Cys-165, Cys-117-Cys-136, Cys-141-Cys-146, Cys-183-Cys-193, and Cys-218-Cys-257. N-linked (GlcNAc...) asparagine; by host glycosylation is present at Asn-142. N-linked (GlcNAc...) asparagine; by host glycosylation is present at Asn-357. 4 disulfide bridges follow: Cys-386–Cys-445, Cys-390–Cys-399, Cys-415–Cys-434, and Cys-462–Cys-485. N-linked (GlcNAc...) asparagine; by host glycosylation occurs at Asn-409. The helical transmembrane segment at 496 to 516 threads the bilayer; it reads LLLLTFCFGWVLIPTITMILL. The Cytoplasmic segment spans residues 517–637; it reads KILIAFAYLC…LSLFRYRSRF (121 aa). Residues 526–543 form a binding to the ribonucleoprotein region; sequence CSKYNTDSKFRILIEKVK. CCHC-type zinc fingers lie at residues 555–575 and 580–601; these read CEVCQYECETAKELESHRKSC and CPYCLNPSEATTSALQAHFKVC. 3 binding to the ribonucleoprotein regions span residues 598 to 615, 602 to 613, and 621 to 635; these read FKVCKLRSRFQENLRKSL, KLRSRFQENLRK, and MQGCYRTLSLFRYRS. An ITAM domain is found at 621–644; that stretch reads MQGCYRTLSLFRYRSRFFVGLVWC. The short motif at 625-628 is the YxxL element; it reads YRTL. A helical membrane pass occupies residues 638–658; that stretch reads FVGLVWCVLLVHHLIVWAASA. The Lumenal segment spans residues 659-1114; that stretch reads ETQNLNAGWT…EWILGVLNGN (456 aa). 8 cysteine pairs are disulfide-bonded: Cys-745–Cys-780, Cys-749–Cys-787, Cys-761–Cys-894, Cys-775–Cys-905, Cys-790–Cys-913, Cys-816–Cys-825, Cys-833–Cys-842, and Cys-873–Cys-877. Residues 767 to 787 form a fusion loop region; it reads YEYETGWGCNPPDCPGVGTGC. N-linked (GlcNAc...) asparagine; by host glycosylation occurs at Asn-937. Cystine bridges form between Cys-979–Cys-1009, Cys-1002–Cys-1054, Cys-1019–Cys-1024, Cys-1055–Cys-1060, and Cys-1094–Cys-1098. The helical transmembrane segment at 1115–1135 threads the bilayer; the sequence is WMVVAVLVVLLILSILLFTLC. 2 binding to the ribonucleoprotein regions span residues 1131-1143 and 1131-1148; these read LFTLCCPRRPSYR and LFTLCCPRRPSYRKEHKP. Residues 1136 to 1148 are Cytoplasmic-facing; that stretch reads CPRRPSYRKEHKP.

It belongs to the hantavirus envelope glycoprotein family. As to quaternary structure, homodimer. Homotetramer; forms heterotetrameric Gn-Gc spikes in the pre-fusion conformation. Interacts (via C-terminus) with the nucleoprotein. Interacts with host TUFM; this interaction contributes to the virus-induced degradation of mitochondria by autophagy, which leads to degradation of host MAVS and inhibition of type I interferon (IFN) responses. Interacts with host MAP1LC3B; this interaction contributes to the virus-induced degradation of mitochondria by autophagy, which leads to degradation of host MAVS and inhibition of type I interferon (IFN) responses. Homodimer. Homotetramer; forms heterotetrameric Gn-Gc spikes in the pre-fusion conformation. Homotrimer; forms homotrimer in the post-fusion conformation at acidic pH. Interacts (via C-terminus) with the nucleoprotein. In terms of processing, envelope polyprotein precursor is quickly cleaved in vivo just after synthesis, presumably by host signal peptidase.

The protein resides in the virion membrane. It is found in the host cell surface. The protein localises to the host Golgi apparatus membrane. Its subcellular location is the host endoplasmic reticulum membrane. It localises to the host mitochondrion. Forms homotetramers with glycoprotein C at the surface of the virion. Attaches the virion to host cell receptors including integrin ITGAV/ITGB3. This attachment induces virion internalization predominantly through clathrin-dependent endocytosis. Mediates the assembly and budding of infectious virus particles through its interaction with the nucleocapsid protein and the viral genome. May dysregulate normal immune and endothelial cell responses through an ITAM motif. Translocates to mitochondria, binds to host TUFM and recruits MAP1LC3B. These interactions induce mitochondrial autophagy and therefore destruction of host MAVS leading to inhibition of type I interferon (IFN) responses. Concomitant breakdown of glycoprotein N is apparently prevented by the nucleoprotein that may inhibit Gn-stimulated autophagosome-lysosome fusion. Interacts with the viral genomic RNA. In terms of biological role, forms homotetramers with glycoprotein N at the surface of the virion. Attaches the virion to host cell receptors including integrin ITGAV/ITGB3. This attachment induces virion internalization predominantly through clathrin-dependent endocytosis. Class II fusion protein that promotes fusion of viral membrane with host endosomal membrane after endocytosis of the virion. The chain is Envelopment polyprotein (GP) from Homo sapiens (Human).